A 109-amino-acid chain; its full sequence is Protein reprimo (109 aa).

N-linked (GlcNAc...) asparagine glycosylation is found at Asn7 and Asn18. The helical transmembrane segment at 56-76 (VVQIAVMCVLSLTVVFGIFFL) threads the bilayer. A Phosphoserine modification is found at Ser98.

It belongs to the reprimo family.

The protein resides in the cytoplasm. It localises to the membrane. Functionally, may be involved in the regulation of p53-dependent G2 arrest of the cell cycle. Seems to induce cell cycle arrest by inhibiting CDK1 activity and nuclear translocation of the CDC2 cyclin B1 complex. The chain is Protein reprimo (Rprm) from Mus musculus (Mouse).